Consider the following 356-residue polypeptide: Nicotinate-nucleotide--dimethylbenzimidazole phosphoribosyltransferase (356 aa).

The Proton acceptor role is filled by glutamate 317.

The protein belongs to the CobT family. As to quaternary structure, homodimer.

The catalysed reaction is 5,6-dimethylbenzimidazole + nicotinate beta-D-ribonucleotide = alpha-ribazole 5'-phosphate + nicotinate + H(+). It functions in the pathway nucleoside biosynthesis; alpha-ribazole biosynthesis; alpha-ribazole from 5,6-dimethylbenzimidazole: step 1/2. In terms of biological role, catalyzes the synthesis of alpha-ribazole-5'-phosphate from nicotinate mononucleotide (NAMN) and 5,6-dimethylbenzimidazole (DMB). The polypeptide is Nicotinate-nucleotide--dimethylbenzimidazole phosphoribosyltransferase (Salmonella paratyphi C (strain RKS4594)).